Here is a 228-residue protein sequence, read N- to C-terminus: Small ribosomal subunit protein uS3 (228 aa).

Residues 39–107 (VREYLQDKLK…PVHINIEEIR (69 aa)) form the KH type-2 domain.

It belongs to the universal ribosomal protein uS3 family. Part of the 30S ribosomal subunit. Forms a tight complex with proteins S10 and S14.

In terms of biological role, binds the lower part of the 30S subunit head. Binds mRNA in the 70S ribosome, positioning it for translation. The chain is Small ribosomal subunit protein uS3 from Stutzerimonas stutzeri (strain A1501) (Pseudomonas stutzeri).